Here is a 350-residue protein sequence, read N- to C-terminus: 4-hydroxy-3-methylbut-2-en-1-yl diphosphate synthase (flavodoxin) (350 aa).

Residues Cys263, Cys266, Cys298, and Glu305 each coordinate [4Fe-4S] cluster.

Belongs to the IspG family. The cofactor is [4Fe-4S] cluster.

The catalysed reaction is (2E)-4-hydroxy-3-methylbut-2-enyl diphosphate + oxidized [flavodoxin] + H2O + 2 H(+) = 2-C-methyl-D-erythritol 2,4-cyclic diphosphate + reduced [flavodoxin]. It participates in isoprenoid biosynthesis; isopentenyl diphosphate biosynthesis via DXP pathway; isopentenyl diphosphate from 1-deoxy-D-xylulose 5-phosphate: step 5/6. In terms of biological role, converts 2C-methyl-D-erythritol 2,4-cyclodiphosphate (ME-2,4cPP) into 1-hydroxy-2-methyl-2-(E)-butenyl 4-diphosphate. This chain is 4-hydroxy-3-methylbut-2-en-1-yl diphosphate synthase (flavodoxin), found in Nautilia profundicola (strain ATCC BAA-1463 / DSM 18972 / AmH).